We begin with the raw amino-acid sequence, 171 residues long: Phosphinothricin N-acetyltransferase (171 aa).

Residues 7-171 (VQVRPGVEED…WDVAWYERPL (165 aa)) enclose the N-acetyltransferase domain. Residues 94–96 (VYV), 102–107 (GRGIGS), and N133 each bind acetyl-CoA.

This sequence belongs to the acetyltransferase family. PAT/BAR subfamily.

It carries out the reaction phosphinothricin + acetyl-CoA = N-acetylphosphinothricin + CoA + H(+). Its function is as follows. Inactivates phosphinothricin (PPT) by transfer of an acetyl group from acetyl CoA. The physiological substrate could be a structurally related compound. This is Phosphinothricin N-acetyltransferase from Streptomyces coelicolor (strain ATCC BAA-471 / A3(2) / M145).